Consider the following 398-residue polypeptide: Isopenicillin N epimerase (398 aa).

N6-(pyridoxal phosphate)lysine is present on lysine 217.

The protein belongs to the class-V pyridoxal-phosphate-dependent aminotransferase family. Requires pyridoxal 5'-phosphate as cofactor.

The enzyme catalyses isopenicillin N = penicillin N. The protein operates within antibiotic biosynthesis; cephalosporin C biosynthesis. Its function is as follows. Catalyzes the reversible isomerization between isopenicillin N and penicillin N. The sequence is that of Isopenicillin N epimerase (cefD) from Streptomyces clavuligerus.